We begin with the raw amino-acid sequence, 192 residues long: Erythropoietin (192 aa).

Positions 1–25 are cleaved as a signal peptide; sequence MGARDCTPLLMLSFLLFPLGFPVLG. Intrachain disulfides connect Cys-32/Cys-187 and Cys-54/Cys-58. Asn-49 is a glycosylation site (N-linked (GlcNAc...) asparagine). 2 N-linked (GlcNAc...) asparagine glycosylation sites follow: Asn-63 and Asn-108.

Belongs to the EPO/TPO family. As to expression, produced by kidney or liver of adult mammals and by liver of fetal or neonatal mammals.

It localises to the secreted. Its function is as follows. Hormone involved in the regulation of erythrocyte proliferation and differentiation and the maintenance of a physiological level of circulating erythrocyte mass. Binds to EPOR leading to EPOR dimerization and JAK2 activation thereby activating specific downstream effectors, including STAT1 and STAT3. The protein is Erythropoietin (EPO) of Bos mutus grunniens (Wild yak).